Consider the following 122-residue polypeptide: Large ribosomal subunit protein uL18 (122 aa).

Belongs to the universal ribosomal protein uL18 family. In terms of assembly, part of the 50S ribosomal subunit; part of the 5S rRNA/L5/L18/L25 subcomplex. Contacts the 5S and 23S rRNAs.

This is one of the proteins that bind and probably mediate the attachment of the 5S RNA into the large ribosomal subunit, where it forms part of the central protuberance. The sequence is that of Large ribosomal subunit protein uL18 from Dictyoglomus thermophilum (strain ATCC 35947 / DSM 3960 / H-6-12).